The following is a 558-amino-acid chain: Potassium-transporting ATPase potassium-binding subunit (558 aa).

12 consecutive transmembrane segments (helical) span residues 1 to 21 (MSIVLFLIVFILLSLIVSRYL), 60 to 80 (IKHFLLFNGLMGGLSFVLLLI), 129 to 149 (VITFLMFTSAASGYAVCIAML), 169 to 189 (FIVRVLIPFALIISLFLISQG), 246 to 266 (WSNYAEALSMMLIPGSLVFLF), 281 to 301 (IMIFVAMFVMFIGFLVTCLYF), 326 to 346 (FGIGLSALFTTITTAFTTGTV), 353 to 373 (LTPLGGMVPMVLMMLNAVFGG), 376 to 396 (VGLMNMLIYVMLTVFICSLMI), 415 to 435 (IALSFLVHPLLILVFSALAFI), 485 to 505 (IVMLLARYIPIVLQILIVSSL), and 523 to 543 (LFFSSVLIIFIILLSGLTFLP).

The protein belongs to the KdpA family. The system is composed of three essential subunits: KdpA, KdpB and KdpC.

Its subcellular location is the cell membrane. Its function is as follows. Part of the high-affinity ATP-driven potassium transport (or Kdp) system, which catalyzes the hydrolysis of ATP coupled with the electrogenic transport of potassium into the cytoplasm. This subunit binds the extracellular potassium ions and delivers the ions to the membrane domain of KdpB through an intramembrane tunnel. The chain is Potassium-transporting ATPase potassium-binding subunit from Staphylococcus haemolyticus (strain JCSC1435).